Consider the following 594-residue polypeptide: Putative lipase ATG15-1 (594 aa).

Over 1-12 (MRRRPLCTSASR) the chain is Cytoplasmic. A helical; Signal-anchor for type II membrane protein transmembrane segment spans residues 13 to 33 (VTASLLLSFLAVSSAAELPIL). Over 34–594 (PAPPISPQPH…ANHFVYVLHA (561 aa)) the chain is Lumenal. 5 N-linked (GlcNAc...) asparagine glycosylation sites follow: Asn-144, Asn-179, Asn-201, Asn-259, and Asn-283. Ser-299 functions as the Charge relay system in the catalytic mechanism. N-linked (GlcNAc...) asparagine glycans are attached at residues Asn-432 and Asn-445. Residues 447–469 (TETTTTSTSKPTSTSKSSKSNTR) are compositionally biased toward low complexity. Disordered regions lie at residues 447–473 (TETTTTSTSKPTSTSKSSKSNTRTRTE) and 489–509 (TGTQTSTSTPKHTSTSSTSTC). Asn-576 and Asn-582 each carry an N-linked (GlcNAc...) asparagine glycan.

The protein belongs to the AB hydrolase superfamily. Lipase family. Binds to both phosphatidylinositol (PI) and phosphatidylinositol 3,5-bisphosphate (PIP2).

The protein localises to the endosome. The protein resides in the multivesicular body membrane. Its subcellular location is the prevacuolar compartment membrane. It carries out the reaction a triacylglycerol + H2O = a diacylglycerol + a fatty acid + H(+). In terms of biological role, lipase which is essential for lysis of subvacuolar cytoplasm to vacuole targeted bodies and intravacuolar autophagic bodies. Involved in the lysis of intravacuolar multivesicular body (MVB) vesicles. The intravacuolar membrane disintegration by ATG15 is critical to life span extension. In Phaeosphaeria nodorum (strain SN15 / ATCC MYA-4574 / FGSC 10173) (Glume blotch fungus), this protein is Putative lipase ATG15-1 (ATG15-1).